Here is a 200-residue protein sequence, read N- to C-terminus: MSDYELDPLPYEYDALEPHISEQVLTWHHDTHHQGYVNGWNAAEETLAENREAGEFGSSAGALRNVTHNGSGHILHDLFWQNMSPEGGDEPEGALAERIAEDFGSYEAWKGEFEAAAGAAGGWALLVYDSFSNQLRNVVVDKHDQGALWGSHPILALDVWEHSYYHDYGPARGDFVSAFFEVVDWDEPAARYEQAVELFE.

His29, His76, Asp158, and His162 together coordinate Mn(2+).

It belongs to the iron/manganese superoxide dismutase family. Requires Mn(2+) as cofactor.

It catalyses the reaction 2 superoxide + 2 H(+) = H2O2 + O2. Functionally, destroys superoxide anion radicals which are normally produced within the cells and which are toxic to biological systems. The chain is Superoxide dismutase [Mn] 1 (sod1) from Haloferax volcanii (strain ATCC 29605 / DSM 3757 / JCM 8879 / NBRC 14742 / NCIMB 2012 / VKM B-1768 / DS2) (Halobacterium volcanii).